A 52-amino-acid chain; its full sequence is Superoxide dismutase [Cu-Zn] 2 (52 aa).

His-44 contacts Cu cation.

This sequence belongs to the Cu-Zn superoxide dismutase family. As to quaternary structure, homodimer. Requires Cu cation as cofactor. Zn(2+) is required as a cofactor.

The protein localises to the cytoplasm. The enzyme catalyses 2 superoxide + 2 H(+) = H2O2 + O2. Functionally, destroys radicals which are normally produced within the cells and which are toxic to biological systems. The polypeptide is Superoxide dismutase [Cu-Zn] 2 (Debaryomyces hansenii (Yeast)).